The sequence spans 419 residues: Synaptic vesicle membrane protein VAT-1 homolog-like (419 aa).

Positions 1-25 are enriched in basic and acidic residues; sequence MAKEGVEKAEETEQMIEKEAGKEPA. Disordered regions lie at residues 1–36 and 384–419; these read MAKE…SHRL and PTPL…PFIQ. Position 392 is a phosphoserine (S392). Phosphothreonine occurs at positions 393 and 395. Phosphoserine is present on S396. A compositionally biased stretch (acidic residues) spans 397-407; the sequence is EAGEEEEDHEG. The segment covering 408 to 419 has biased composition (basic and acidic residues); that stretch reads DSENKERMPFIQ.

This sequence belongs to the zinc-containing alcohol dehydrogenase family. Quinone oxidoreductase subfamily. In terms of tissue distribution, detected in skin fibroblasts.

The polypeptide is Synaptic vesicle membrane protein VAT-1 homolog-like (VAT1L) (Homo sapiens (Human)).